Here is a 145-residue protein sequence, read N- to C-terminus: D-aminoacyl-tRNA deacylase (145 aa).

The Gly-cisPro motif, important for rejection of L-amino acids motif lies at 137–138 (GP).

This sequence belongs to the DTD family. In terms of assembly, homodimer.

Its subcellular location is the cytoplasm. The enzyme catalyses glycyl-tRNA(Ala) + H2O = tRNA(Ala) + glycine + H(+). It catalyses the reaction a D-aminoacyl-tRNA + H2O = a tRNA + a D-alpha-amino acid + H(+). An aminoacyl-tRNA editing enzyme that deacylates mischarged D-aminoacyl-tRNAs. Also deacylates mischarged glycyl-tRNA(Ala), protecting cells against glycine mischarging by AlaRS. Acts via tRNA-based rather than protein-based catalysis; rejects L-amino acids rather than detecting D-amino acids in the active site. By recycling D-aminoacyl-tRNA to D-amino acids and free tRNA molecules, this enzyme counteracts the toxicity associated with the formation of D-aminoacyl-tRNA entities in vivo and helps enforce protein L-homochirality. This Serratia proteamaculans (strain 568) protein is D-aminoacyl-tRNA deacylase.